The sequence spans 100 residues: Co-chaperonin GroES (100 aa).

This sequence belongs to the GroES chaperonin family. In terms of assembly, heptamer of 7 subunits arranged in a ring. Interacts with the chaperonin GroEL.

It localises to the cytoplasm. In terms of biological role, together with the chaperonin GroEL, plays an essential role in assisting protein folding. The GroEL-GroES system forms a nano-cage that allows encapsulation of the non-native substrate proteins and provides a physical environment optimized to promote and accelerate protein folding. GroES binds to the apical surface of the GroEL ring, thereby capping the opening of the GroEL channel. This chain is Co-chaperonin GroES, found in Mycolicibacterium vanbaalenii (strain DSM 7251 / JCM 13017 / BCRC 16820 / KCTC 9966 / NRRL B-24157 / PYR-1) (Mycobacterium vanbaalenii).